The primary structure comprises 128 residues: Small ribosomal subunit protein uS11 (128 aa).

It belongs to the universal ribosomal protein uS11 family. In terms of assembly, part of the 30S ribosomal subunit. Interacts with proteins S7 and S18. Binds to IF-3.

Located on the platform of the 30S subunit, it bridges several disparate RNA helices of the 16S rRNA. Forms part of the Shine-Dalgarno cleft in the 70S ribosome. The polypeptide is Small ribosomal subunit protein uS11 (Methylococcus capsulatus (strain ATCC 33009 / NCIMB 11132 / Bath)).